A 130-amino-acid chain; its full sequence is Small ribosomal subunit protein uS11 (130 aa).

Belongs to the universal ribosomal protein uS11 family. As to quaternary structure, part of the 30S ribosomal subunit. Interacts with proteins S7 and S18. Binds to IF-3.

Its function is as follows. Located on the platform of the 30S subunit, it bridges several disparate RNA helices of the 16S rRNA. Forms part of the Shine-Dalgarno cleft in the 70S ribosome. This chain is Small ribosomal subunit protein uS11, found in Gloeothece citriformis (strain PCC 7424) (Cyanothece sp. (strain PCC 7424)).